A 366-amino-acid polypeptide reads, in one-letter code: Anhydro-N-acetylmuramic acid kinase (366 aa).

10-17 (GTSMDGID) contributes to the ATP binding site.

It belongs to the anhydro-N-acetylmuramic acid kinase family.

It carries out the reaction 1,6-anhydro-N-acetyl-beta-muramate + ATP + H2O = N-acetyl-D-muramate 6-phosphate + ADP + H(+). Its pathway is amino-sugar metabolism; 1,6-anhydro-N-acetylmuramate degradation. The protein operates within cell wall biogenesis; peptidoglycan recycling. Functionally, catalyzes the specific phosphorylation of 1,6-anhydro-N-acetylmuramic acid (anhMurNAc) with the simultaneous cleavage of the 1,6-anhydro ring, generating MurNAc-6-P. Is required for the utilization of anhMurNAc either imported from the medium or derived from its own cell wall murein, and thus plays a role in cell wall recycling. This chain is Anhydro-N-acetylmuramic acid kinase, found in Legionella pneumophila subsp. pneumophila (strain Philadelphia 1 / ATCC 33152 / DSM 7513).